The following is a 416-amino-acid chain: N-carbamoyl-L-amino-acid amidohydrolase (416 aa).

A divalent metal cation is bound by residues histidine 87, aspartate 98, glutamate 133, and histidine 194. The an N-carbamoyl-L-alpha-amino acid site is built by glutamine 197, histidine 230, asparagine 279, arginine 292, and glycine 361. An involved in dimerization region spans residues 213–331; that stretch reads HCQGLWWLEF…SIEAVGHFDP (119 aa). Position 386 (histidine 386) interacts with a divalent metal cation.

The protein belongs to the peptidase M20 family. Homodimer. Mn(2+) serves as cofactor. The cofactor is Ni(2+). It depends on Co(2+) as a cofactor. Requires Fe(2+) as cofactor.

The enzyme catalyses an N-carbamoyl-L-alpha-amino acid + H2O + 2 H(+) = an L-alpha-amino acid + NH4(+) + CO2. It catalyses the reaction N-carbamoyl-L-methionine + H2O + 2 H(+) = L-methionine + NH4(+) + CO2. It carries out the reaction N-acetyl-L-methionine + H2O = L-methionine + acetate. The catalysed reaction is N(alpha)-formyl-L-methionine + H2O = formate + L-methionine. The enzyme catalyses N-carbamoyl-L-alanine + H2O + 2 H(+) = L-alanine + NH4(+) + CO2. It catalyses the reaction N-carbamoyl-L-cysteine + H2O + 2 H(+) = L-cysteine + NH4(+) + CO2. It carries out the reaction N-carbamoyl-L-tryptophan + H2O + 2 H(+) = L-tryptophan + NH4(+) + CO2. The catalysed reaction is N-carbamoyl-L-valine + H2O + 2 H(+) = L-valine + NH4(+) + CO2. The enzyme catalyses N-carbamoyl-L-phenylalanine + H2O + 2 H(+) = L-phenylalanine + NH4(+) + CO2. With respect to regulation, strongly inhibited by Hg(2+), Cu(2+), Zn(2+), Pb(2+) and Fe(3+) ions, and slightly inhibited by Na(+) and K(+) ions. Beta-mercaptoethanol and 5,5'-dithiobis-(2-nitrobenzoic acid)(DTNB) cause 34% and 42% inhibition, respectively. Functionally, catalyzes the hydrolysis of both aliphatic and aromatic N-carbamoyl-L-alpha-amino acids to free L-alpha-amino acids. Is strictly L-specific since it is inactive toward N-carbamoyl-D-alpha-amino acids. Is also able to hydrolyze N-formyl-L-methionine and N-acetyl-L-methionine, but not ureidosuccinate or 3-ureidopropanoate. The protein is N-carbamoyl-L-amino-acid amidohydrolase of Rhizobium meliloti (Ensifer meliloti).